The sequence spans 449 residues: Tubulin alpha-2 chain (449 aa).

Residue glutamine 11 coordinates GTP. The residue at position 40 (lysine 40) is an N6-acetyllysine. 7 residues coordinate GTP: glutamate 71, serine 140, glycine 144, threonine 145, threonine 179, asparagine 206, and asparagine 228. Glutamate 71 provides a ligand contact to Mg(2+). Residue glutamate 254 is part of the active site.

The protein belongs to the tubulin family. Dimer of alpha and beta chains. A typical microtubule is a hollow water-filled tube with an outer diameter of 25 nm and an inner diameter of 15 nM. Alpha-beta heterodimers associate head-to-tail to form protofilaments running lengthwise along the microtubule wall with the beta-tubulin subunit facing the microtubule plus end conferring a structural polarity. Microtubules usually have 13 protofilaments but different protofilament numbers can be found in some organisms and specialized cells. The cofactor is Mg(2+). Post-translationally, undergoes a tyrosination/detyrosination cycle, the cyclic removal and re-addition of a C-terminal tyrosine residue by the enzymes tubulin tyrosine carboxypeptidase (TTCP) and tubulin tyrosine ligase (TTL), respectively. Acetylation of alpha chains at Lys-40 stabilizes microtubules and affects affinity and processivity of microtubule motors. This modification has a role in multiple cellular functions, ranging from cell motility, cell cycle progression or cell differentiation to intracellular trafficking and signaling. During the early stages of oogenesis lky/Alpha-tubulin N-acetyltransferase 2 is the main acetyltransferase responsible for Lys-40 acetylation in germline cells while Atat/alpha-tubulin N-acetyltransferase 1 is the main acetyltransferase responsible for Lys-40 acetylation in somatic cells.

It is found in the cytoplasm. Its subcellular location is the cytoskeleton. It catalyses the reaction GTP + H2O = GDP + phosphate + H(+). Tubulin is the major constituent of microtubules, a cylinder consisting of laterally associated linear protofilaments composed of alpha- and beta-tubulin heterodimers. Microtubules grow by the addition of GTP-tubulin dimers to the microtubule end, where a stabilizing cap forms. Below the cap, tubulin dimers are in GDP-bound state, owing to GTPase activity of alpha-tubulin. The chain is Tubulin alpha-2 chain (alphaTub85E) from Drosophila melanogaster (Fruit fly).